Reading from the N-terminus, the 218-residue chain is Stress response regulator protein 1 (218 aa).

Residues 90–209 (RFLLVDDNSI…YRVVLDVVDN (120 aa)) form the Response regulatory domain. Aspartate 142 is modified (4-aspartylphosphate).

Functionally, required for stress adaptation, morphogenesis and virulence. The chain is Stress response regulator protein 1 (SRR1) from Meyerozyma guilliermondii (strain ATCC 6260 / CBS 566 / DSM 6381 / JCM 1539 / NBRC 10279 / NRRL Y-324) (Yeast).